Consider the following 781-residue polypeptide: Mitogen-activated protein kinase 7 (781 aa).

The disordered stretch occupies residues M1–G27. Position 2 is an N-acetylalanine (A2). Residues A2–T77 form a required for cytoplasmic targeting region. The Protein kinase domain occupies Y55–L347. ATP is bound by residues I61–V69 and K84. Positions G78–L139 are required for binding to MAP2K5. Positions M140–Q406 are necessary for oligomerization. D182 functions as the Proton acceptor in the catalytic mechanism. The short motif at T219 to Y221 is the TXY element. The tract at residues Q402–V708 is disordered. Positions P407 to P781 are may not be required for kinase activity; required to stimulate MEF2C activity. Composition is skewed to pro residues over residues S433 to A445 and Q454 to A463. Positions K476–S486 are enriched in low complexity. Composition is skewed to basic and acidic residues over residues P502–E519, R527–G544, and D563–T573. The Nuclear localization signal motif lies at R505–E539. 2 stretches are compositionally biased toward pro residues: residues P578–G594 and G601–A614. Composition is skewed to low complexity over residues A615 to Q632 and G642 to F652. Positions P653–A664 are enriched in pro residues. Residues S668–S685 are compositionally biased toward polar residues. At S685 the chain carries Phosphoserine. T698 is subject to Phosphothreonine.

The protein belongs to the protein kinase superfamily. CMGC Ser/Thr protein kinase family. MAP kinase subfamily. As to quaternary structure, interacts with MAP2K5. Forms oligomers. Interacts with MEF2A, MEF2C and MEF2D; the interaction phosphorylates the MEF2s and enhances transcriptional activity of MEF2A, MEF2C but not MEF2D. Interacts with SGK1. Interacts with PML. Interacts (via N-terminal half) with HSP90AB1-CDC37 chaperone complex in resting cells; the interaction is MAP2K5-independent and prevents MAPK7 from ubiquitination and proteasomal degradation. Interacts with STUB1/CHIP; the interaction is enhanced in the presence of IGF1 or MAP2K5 and promotes STUB1/CHIP E3 ligase activity. Mg(2+) serves as cofactor. Dually phosphorylated on Thr-219 and Tyr-221, which activates the enzyme.

Its subcellular location is the cytoplasm. The protein localises to the nucleus. The protein resides in the PML body. The enzyme catalyses L-seryl-[protein] + ATP = O-phospho-L-seryl-[protein] + ADP + H(+). It catalyses the reaction L-threonyl-[protein] + ATP = O-phospho-L-threonyl-[protein] + ADP + H(+). Its activity is regulated as follows. Activated by tyrosine and threonine phosphorylation. Activated in response to hyperosmolarity, hydrogen peroxide, and epidermal growth factor (EGF). Its function is as follows. Plays a role in various cellular processes such as proliferation, differentiation and cell survival. The upstream activator of MAPK7 is the MAPK kinase MAP2K5. Upon activation, it translocates to the nucleus and phosphorylates various downstream targets including MEF2C. EGF activates MAPK7 through a Ras-independent and MAP2K5-dependent pathway. As part of the MAPK/ERK signaling pathway, acts as a negative regulator of apoptosis in cardiomyocytes via interaction with STUB1/CHIP and promotion of STUB1-mediated ubiquitination and degradation of ICER-type isoforms of CREM. May have a role in muscle cell differentiation. May be important for endothelial function and maintenance of blood vessel integrity. MAP2K5 and MAPK7 interact specifically with one another and not with MEK1/ERK1 or MEK2/ERK2 pathways. Phosphorylates SGK1 at Ser-78 and this is required for growth factor-induced cell cycle progression. Involved in the regulation of p53/TP53 by disrupting the PML-MDM2 interaction. This Bos taurus (Bovine) protein is Mitogen-activated protein kinase 7 (MAPK7).